Reading from the N-terminus, the 202-residue chain is Coiled-coil domain-containing protein 85B (202 aa).

Position 1 is an N-acetylmethionine (Met-1). 2 coiled-coil regions span residues 44–82 (RLMQEVNRQLQGHLGEIRELKQLNRRLQAENRELRDLCC) and 118–141 (QKLAELEGRQEELLRENLALKELC). The segment covering 152–162 (GGPGGAVGSGA) has biased composition (gly residues). The interval 152 to 202 (GGPGGAVGSGAGPTPELALPPCGPRDLGDGSSSTGSVGSPDQLPLACSPDD) is disordered. Residues 180–190 (DGSSSTGSVGS) show a composition bias toward low complexity.

The protein belongs to the CCDC85 family. Interacts with CEBPB. May interact with CEBPD. Interacts with EURL. Interacts with MCRS1. Interacts with TCF7L2; competes with CTNNB1. Interacts with ANKRD26. Interacts with the beta-catenin family proteins ARVCF, CTNND1, CTNND2 and PKP4. As to expression, expressed in white and brown adipose tissue.

The protein resides in the nucleus. It localises to the cytoplasm. The protein localises to the cytoskeleton. Its subcellular location is the microtubule organizing center. It is found in the centrosome. The protein resides in the cell junction. It localises to the adherens junction. Functions as a transcriptional repressor. May inhibit the activity of CTNNB1 in a TP53-dependent manner and thus regulate cell growth. May function in adipocyte differentiation, negatively regulating mitotic clonal expansion. Plays a role in cell-cell adhesion and epithelium development through its interaction with proteins of the beta-catenin family. The sequence is that of Coiled-coil domain-containing protein 85B (Ccdc85b) from Mus musculus (Mouse).